The sequence spans 283 residues: Phosphatidylserine decarboxylase proenzyme (283 aa).

Catalysis depends on charge relay system; for autoendoproteolytic cleavage activity residues D89, H146, and S249. Residue S249 is the Schiff-base intermediate with substrate; via pyruvic acid; for decarboxylase activity of the active site. At S249 the chain carries Pyruvic acid (Ser); by autocatalysis.

Belongs to the phosphatidylserine decarboxylase family. PSD-B subfamily. Prokaryotic type I sub-subfamily. Heterodimer of a large membrane-associated beta subunit and a small pyruvoyl-containing alpha subunit. Requires pyruvate as cofactor. In terms of processing, is synthesized initially as an inactive proenzyme. Formation of the active enzyme involves a self-maturation process in which the active site pyruvoyl group is generated from an internal serine residue via an autocatalytic post-translational modification. Two non-identical subunits are generated from the proenzyme in this reaction, and the pyruvate is formed at the N-terminus of the alpha chain, which is derived from the carboxyl end of the proenzyme. The autoendoproteolytic cleavage occurs by a canonical serine protease mechanism, in which the side chain hydroxyl group of the serine supplies its oxygen atom to form the C-terminus of the beta chain, while the remainder of the serine residue undergoes an oxidative deamination to produce ammonia and the pyruvoyl prosthetic group on the alpha chain. During this reaction, the Ser that is part of the protease active site of the proenzyme becomes the pyruvoyl prosthetic group, which constitutes an essential element of the active site of the mature decarboxylase.

It localises to the cell membrane. The catalysed reaction is a 1,2-diacyl-sn-glycero-3-phospho-L-serine + H(+) = a 1,2-diacyl-sn-glycero-3-phosphoethanolamine + CO2. It functions in the pathway phospholipid metabolism; phosphatidylethanolamine biosynthesis; phosphatidylethanolamine from CDP-diacylglycerol: step 2/2. In terms of biological role, catalyzes the formation of phosphatidylethanolamine (PtdEtn) from phosphatidylserine (PtdSer). The polypeptide is Phosphatidylserine decarboxylase proenzyme (Legionella pneumophila subsp. pneumophila (strain Philadelphia 1 / ATCC 33152 / DSM 7513)).